We begin with the raw amino-acid sequence, 327 residues long: Putative ABC transporter ATP-binding protein MM_0887 (327 aa).

The tract at residues 1–44 (MSKSTPLKSSIIRADLPEQAEGRTGPETGKDPEKTGNSEGKTDT) is disordered. The span at 28–44 (TGKDPEKTGNSEGKTDT) shows a compositional bias: basic and acidic residues. Residues 47-282 (IEIKDLCHRY…PALLRKAHLR (236 aa)) enclose the ABC transporter domain. An ATP-binding site is contributed by 81–88 (GANGAGKS).

Belongs to the ABC transporter superfamily.

The protein localises to the cell membrane. Its function is as follows. Probably part of an ABC transporter complex. Responsible for energy coupling to the transport system. This chain is Putative ABC transporter ATP-binding protein MM_0887, found in Methanosarcina mazei (strain ATCC BAA-159 / DSM 3647 / Goe1 / Go1 / JCM 11833 / OCM 88) (Methanosarcina frisia).